An 892-amino-acid polypeptide reads, in one-letter code: Alpha-actinin-1 (892 aa).

Met-1 carries the N-acetylmethionine modification. The segment at 1–247 is actin-binding; sequence MDHYDSQQTN…IMTYVSSFYH (247 aa). Phosphoserine is present on Ser-6. Phosphotyrosine; by FAK1 is present on Tyr-12. 2 consecutive Calponin-homology (CH) domains span residues 31 to 135 and 144 to 250; these read KQQR…LRFA and TSAK…HAFS. N6-acetyllysine is present on residues Lys-95 and Lys-195. Spectrin repeat units follow at residues 274–384, 394–499, 509–620, and 630–733; these read QLME…WLLN, HLAE…ALER, QLYL…ALTE, and RLRK…EVEN. The interval 274–733 is interaction with DDN; the sequence is QLMEDYEKLA…IARTINEVEN (460 aa). Ser-471 carries the post-translational modification Phosphoserine. At Lys-676 the chain carries N6-acetyllysine. A Phosphoserine modification is found at Ser-677. EF-hand domains follow at residues 746-781 and 787-822; these read EQMNEFRASFNHFDRDHSGTLGPEEFKACLISLGYD and QGEAEFARIMSIVDPNRLGVVTFQAFIDFMSRETAD. Ca(2+) is bound by residues Asp-759, Asp-761, Ser-763, Thr-765, and Glu-770. Ser-890 carries the post-translational modification Phosphoserine.

It belongs to the alpha-actinin family. As to quaternary structure, homodimer; antiparallel. Interacts with MYOZ2, TTID and LPP. Interacts with DDN. Interacts with PSD. Interacts with MICALL2. Interacts with DNM2 and CTTN. Interacts with PDLIM1. Interacts with PDLIM2. Interacts with PDLIM4 (via PDZ domain). Interacts with IGSF8.

The protein resides in the cytoplasm. The protein localises to the cytoskeleton. It is found in the myofibril. It localises to the sarcomere. Its subcellular location is the z line. The protein resides in the cell membrane. The protein localises to the cell junction. It is found in the cell projection. It localises to the ruffle. In terms of biological role, F-actin cross-linking protein which is thought to anchor actin to a variety of intracellular structures. Association with IGSF8 regulates the immune synapse formation and is required for efficient T-cell activation. In Bos taurus (Bovine), this protein is Alpha-actinin-1 (ACTN1).